The following is a 324-amino-acid chain: Elongation factor P--(R)-beta-lysine ligase (324 aa).

75–77 (SPE) contacts substrate. Residues 99 to 101 (RNE) and Asn-108 contribute to the ATP site. Tyr-117 lines the substrate pocket. 243-244 (EL) lines the ATP pocket. Glu-250 provides a ligand contact to substrate. Residue Gly-299 participates in ATP binding.

The protein belongs to the class-II aminoacyl-tRNA synthetase family. EpmA subfamily. As to quaternary structure, homodimer.

It carries out the reaction D-beta-lysine + L-lysyl-[protein] + ATP = N(6)-((3R)-3,6-diaminohexanoyl)-L-lysyl-[protein] + AMP + diphosphate + H(+). Functionally, with EpmB is involved in the beta-lysylation step of the post-translational modification of translation elongation factor P (EF-P). Catalyzes the ATP-dependent activation of (R)-beta-lysine produced by EpmB, forming a lysyl-adenylate, from which the beta-lysyl moiety is then transferred to the epsilon-amino group of a conserved specific lysine residue in EF-P. This is Elongation factor P--(R)-beta-lysine ligase from Vibrio cholerae serotype O1 (strain ATCC 39315 / El Tor Inaba N16961).